A 1200-amino-acid chain; its full sequence is DNA polymerase subunit gamma-1 (1200 aa).

2 disordered regions span residues 471-515 (QKKT…RPSM) and 667-688 (MDLSSEVPATAKAKKRNNSSEH). Over residues 472–481 (KKTKISKKQK) the composition is skewed to basic residues. Over residues 494–512 (LVEDHNEDPGPPTEKEESR) the composition is skewed to basic and acidic residues.

It belongs to the DNA polymerase type-A family. In terms of assembly, heterotrimer composed of a catalytic subunit and a homodimer of accessory subunits. Requires Mg(2+) as cofactor.

Its subcellular location is the mitochondrion. The protein localises to the mitochondrion matrix. It localises to the mitochondrion nucleoid. The enzyme catalyses DNA(n) + a 2'-deoxyribonucleoside 5'-triphosphate = DNA(n+1) + diphosphate. Involved in the replication of mitochondrial DNA. Associates with mitochondrial DNA. This is DNA polymerase subunit gamma-1 (polg) from Xenopus laevis (African clawed frog).